A 423-amino-acid chain; its full sequence is Probable peptidoglycan glycosyltransferase FtsW (423 aa).

Residues Met-1 to Leu-53 are Cytoplasmic-facing. The chain crosses the membrane as a helical span at residues Leu-54 to Ile-74. Over Thr-75 to Asn-88 the chain is Periplasmic. Residues Phe-89–Phe-109 traverse the membrane as a helical segment. The Cytoplasmic portion of the chain corresponds to Lys-110–Tyr-119. Residues Ser-120–Gly-140 traverse the membrane as a helical segment. Residues Arg-141–Trp-149 are Periplasmic-facing. A helical membrane pass occupies residues Ile-150 to Phe-170. Residues Ala-171–Ser-184 are Cytoplasmic-facing. Residues Phe-185 to Ala-205 traverse the membrane as a helical segment. Residues Glu-206–Asp-208 are Periplasmic-facing. A helical membrane pass occupies residues Met-209–Asn-229. Topologically, residues Ala-230–Lys-231 are cytoplasmic. Residues Leu-232–Pro-252 form a helical membrane-spanning segment. Residues Leu-253–Asp-310 lie on the Periplasmic side of the membrane. Residues Phe-311–Leu-331 traverse the membrane as a helical segment. Residues Phe-332 to Lys-359 lie on the Cytoplasmic side of the membrane. The chain crosses the membrane as a helical span at residues Gly-360–Leu-380. The Periplasmic portion of the chain corresponds to Pro-381–Thr-386. The chain crosses the membrane as a helical span at residues Leu-387–Leu-407. Over Leu-408–Leu-423 the chain is Cytoplasmic.

The protein belongs to the SEDS family. FtsW subfamily.

Its subcellular location is the cell inner membrane. It catalyses the reaction [GlcNAc-(1-&gt;4)-Mur2Ac(oyl-L-Ala-gamma-D-Glu-L-Lys-D-Ala-D-Ala)](n)-di-trans,octa-cis-undecaprenyl diphosphate + beta-D-GlcNAc-(1-&gt;4)-Mur2Ac(oyl-L-Ala-gamma-D-Glu-L-Lys-D-Ala-D-Ala)-di-trans,octa-cis-undecaprenyl diphosphate = [GlcNAc-(1-&gt;4)-Mur2Ac(oyl-L-Ala-gamma-D-Glu-L-Lys-D-Ala-D-Ala)](n+1)-di-trans,octa-cis-undecaprenyl diphosphate + di-trans,octa-cis-undecaprenyl diphosphate + H(+). It functions in the pathway cell wall biogenesis; peptidoglycan biosynthesis. Its function is as follows. Peptidoglycan polymerase that is essential for cell division. The chain is Probable peptidoglycan glycosyltransferase FtsW from Polynucleobacter necessarius subsp. necessarius (strain STIR1).